A 213-amino-acid chain; its full sequence is Large ribosomal subunit protein uL1 (213 aa).

This sequence belongs to the universal ribosomal protein uL1 family. In terms of assembly, part of the 50S ribosomal subunit.

In terms of biological role, binds directly to 23S rRNA. Probably involved in E site tRNA release. Functionally, protein L1 is also a translational repressor protein, it controls the translation of its operon by binding to its mRNA. This Methanococcus maripaludis (strain C5 / ATCC BAA-1333) protein is Large ribosomal subunit protein uL1.